Here is a 155-residue protein sequence, read N- to C-terminus: MRLRLIAVGSRMPKWVEEGWHEYAKRLPTELSLELVEIPLNTRGKNADVARLIRQEGEAMLSKVQPGERIVTLEVHGKPWSTEQLATELDRWRLDARTVNLMVGGPEGLAPEVCARAEQRWSLSPLTLPHPLVRILIGEQIYRAWTVLSGHPYHK.

S-adenosyl-L-methionine is bound by residues Leu-73, Gly-104, and 123–128; that span reads LSPLTL.

The protein belongs to the RNA methyltransferase RlmH family. Homodimer.

It localises to the cytoplasm. The enzyme catalyses pseudouridine(1915) in 23S rRNA + S-adenosyl-L-methionine = N(3)-methylpseudouridine(1915) in 23S rRNA + S-adenosyl-L-homocysteine + H(+). Its function is as follows. Specifically methylates the pseudouridine at position 1915 (m3Psi1915) in 23S rRNA. This is Ribosomal RNA large subunit methyltransferase H from Pseudomonas putida (strain GB-1).